Consider the following 259-residue polypeptide: Small ribosomal subunit protein uS2 (259 aa).

The disordered stretch occupies residues 232-259 (KAMEAEETKAAEKAVETEAKEETPQEAK).

This sequence belongs to the universal ribosomal protein uS2 family.

In Maridesulfovibrio salexigens (strain ATCC 14822 / DSM 2638 / NCIMB 8403 / VKM B-1763) (Desulfovibrio salexigens), this protein is Small ribosomal subunit protein uS2.